The primary structure comprises 545 residues: Pectinesterase/pectinesterase inhibitor (545 aa).

The first 37 residues, 1-37 (MEINQPNLLEASKSCYSKITFFLLVISFAALVSTGFS), serve as a signal peptide directing secretion. Positions 38–191 (SPELSLHHKI…ILRARTSLAI (154 aa)) are pectinesterase inhibitor. Residues 38-228 (SPELSLHHKI…RRLLQTLGKD (191 aa)) constitute a propeptide that is removed on maturation. Residue Asn-135 is glycosylated (N-linked (GlcNAc...) asparagine). Residues 232-530 (DIVVAKDGSG…TVAELIQGGS (299 aa)) are pectinesterase. Substrate contacts are provided by Thr-307 and Gln-337. Residues Cys-326 and Cys-353 are joined by a disulfide bond. Asp-360 serves as the catalytic Proton donor; for pectinesterase activity. An N-linked (GlcNAc...) (complex) asparagine glycan is attached at Asn-375. Asp-381 serves as the catalytic Nucleophile; for pectinesterase activity. Cys-394 and Cys-428 form a disulfide bridge. Positions 449 and 451 each coordinate substrate.

This sequence in the N-terminal section; belongs to the PMEI family. The protein in the C-terminal section; belongs to the pectinesterase family. Post-translationally, N-glycosylated.

The protein localises to the secreted. The protein resides in the cell wall. It carries out the reaction [(1-&gt;4)-alpha-D-galacturonosyl methyl ester](n) + n H2O = [(1-&gt;4)-alpha-D-galacturonosyl](n) + n methanol + n H(+). The protein operates within glycan metabolism; pectin degradation; 2-dehydro-3-deoxy-D-gluconate from pectin: step 1/5. In terms of biological role, acts in the modification of cell walls via demethylesterification of cell wall pectin. In Ficus pumila var. awkeotsang (Jelly fig), this protein is Pectinesterase/pectinesterase inhibitor.